The sequence spans 398 residues: 8-amino-7-oxononanoate synthase (398 aa).

R26 contacts substrate. 113 to 114 contributes to the pyridoxal 5'-phosphate binding site; it reads GF. H138 serves as a coordination point for substrate. Pyridoxal 5'-phosphate contacts are provided by S181, H209, and T238. K241 carries the post-translational modification N6-(pyridoxal phosphate)lysine. Position 355 (T355) interacts with substrate.

The protein belongs to the class-II pyridoxal-phosphate-dependent aminotransferase family. BioF subfamily. In terms of assembly, homodimer. It depends on pyridoxal 5'-phosphate as a cofactor.

It catalyses the reaction 6-carboxyhexanoyl-[ACP] + L-alanine + H(+) = (8S)-8-amino-7-oxononanoate + holo-[ACP] + CO2. It functions in the pathway cofactor biosynthesis; biotin biosynthesis. Catalyzes the decarboxylative condensation of pimeloyl-[acyl-carrier protein] and L-alanine to produce 8-amino-7-oxononanoate (AON), [acyl-carrier protein], and carbon dioxide. The chain is 8-amino-7-oxononanoate synthase from Aeromonas hydrophila subsp. hydrophila (strain ATCC 7966 / DSM 30187 / BCRC 13018 / CCUG 14551 / JCM 1027 / KCTC 2358 / NCIMB 9240 / NCTC 8049).